The primary structure comprises 388 residues: LL-diaminopimelate aminotransferase (388 aa).

The substrate site is built by Y13, G38, K102, Y126, and N176. Pyridoxal 5'-phosphate-binding positions include S101–K102, Y126, N176, Y207, and S235–S237. N6-(pyridoxal phosphate)lysine is present on K238. Residue R246 participates in pyridoxal 5'-phosphate binding. Substrate is bound at residue R364.

The protein belongs to the class-I pyridoxal-phosphate-dependent aminotransferase family. LL-diaminopimelate aminotransferase subfamily. As to quaternary structure, homodimer. Pyridoxal 5'-phosphate is required as a cofactor.

The catalysed reaction is (2S,6S)-2,6-diaminopimelate + 2-oxoglutarate = (S)-2,3,4,5-tetrahydrodipicolinate + L-glutamate + H2O + H(+). The protein operates within amino-acid biosynthesis; L-lysine biosynthesis via DAP pathway; LL-2,6-diaminopimelate from (S)-tetrahydrodipicolinate (aminotransferase route): step 1/1. In terms of biological role, involved in the synthesis of meso-diaminopimelate (m-DAP or DL-DAP), required for both lysine and peptidoglycan biosynthesis. Catalyzes the direct conversion of tetrahydrodipicolinate to LL-diaminopimelate. This Dehalococcoides mccartyi (strain CBDB1) protein is LL-diaminopimelate aminotransferase.